The following is a 568-amino-acid chain: PCNA-interacting partner (568 aa).

The segment at 442–555 is disordered; that stretch reads QIPTCVHPAP…RNNKAVSKKL (114 aa). Polar residues predominate over residues 488–500; sequence NAWNQTGGKSTQP. A compositionally biased stretch (basic and acidic residues) spans 515–527; sequence ANRECTEQGREEN.

The protein belongs to the PARI family.

It localises to the cytoplasm. Its subcellular location is the nucleus. Functionally, required to suppress inappropriate homologous recombination, thereby playing a central role DNA repair and in the maintenance of genomic stability. This Danio rerio (Zebrafish) protein is PCNA-interacting partner (parpbp).